Here is a 446-residue protein sequence, read N- to C-terminus: Argininosuccinate synthase (446 aa).

ATP is bound by residues 17–25 (AFSGGLDTS) and Ala-43. Residue Tyr-99 coordinates L-citrulline. ATP contacts are provided by Gly-129 and Thr-131. The L-aspartate site is built by Thr-131, Asn-135, and Asp-136. Asn-135 is a binding site for L-citrulline. Residue Asp-136 participates in ATP binding. L-citrulline is bound by residues Arg-139 and Ser-192. ATP is bound at residue Asp-194. The L-citrulline site is built by Thr-201, Glu-203, and Glu-280.

The protein belongs to the argininosuccinate synthase family. Type 2 subfamily. Homotetramer.

The protein resides in the cytoplasm. It carries out the reaction L-citrulline + L-aspartate + ATP = 2-(N(omega)-L-arginino)succinate + AMP + diphosphate + H(+). It participates in amino-acid biosynthesis; L-arginine biosynthesis; L-arginine from L-ornithine and carbamoyl phosphate: step 2/3. This is Argininosuccinate synthase from Burkholderia mallei (strain NCTC 10247).